The primary structure comprises 159 residues: Protein UXT homolog (159 aa).

It belongs to the UXT family.

This is Protein UXT homolog from Nematostella vectensis (Starlet sea anemone).